A 107-amino-acid polypeptide reads, in one-letter code: uncharacterized protein (107 aa).

This is an uncharacterized protein from Yersinia pseudotuberculosis serotype I (strain IP32953).